We begin with the raw amino-acid sequence, 565 residues long: Ubiquitin carboxyl-terminal hydrolase 21 (565 aa).

Composition is skewed to basic and acidic residues over residues 1-14 (MPQASEHRLGRTRE) and 58-70 (PPDERLKKLDLGR). The disordered stretch occupies residues 1-128 (MPQASEHRLG…LRPMGIALGG (128 aa)). Residues 71–81 (GRTSGSRPRGP) show a composition bias toward low complexity. Polar residues predominate over residues 104-116 (SRTNLTRSKSVSS). Positions 134-152 (ELGAALSRLALRPEPPTLR) match the Nuclear export signal motif. The 347-residue stretch at 212 to 558 (VGLRNLGNTC…EGYVLFYQLM (347 aa)) folds into the USP domain. Cys221 acts as the Nucleophile in catalysis. A disordered region spans residues 324–347 (APPILASGPVPSPPRRGGALHEEP). Zn(2+) is bound by residues Cys384, Cys387, Cys437, and Cys440. His518 (proton acceptor) is an active-site residue.

This sequence belongs to the peptidase C19 family. USP21 subfamily. Interacts with BEND3.

The protein resides in the cytoplasm. It is found in the nucleus. The enzyme catalyses Thiol-dependent hydrolysis of ester, thioester, amide, peptide and isopeptide bonds formed by the C-terminal Gly of ubiquitin (a 76-residue protein attached to proteins as an intracellular targeting signal).. In terms of biological role, deubiquitinates histone H2A, a specific tag for epigenetic transcriptional repression, thereby acting as a coactivator. Deubiquitination of histone H2A releaves the repression of di- and trimethylation of histone H3 at 'Lys-4', resulting in regulation of transcriptional initiation. Regulates gene expression via histone H2A deubiquitination. Deubiquitinates BAZ2A/TIP5 leading to its stabilization. Also capable of removing NEDD8 from NEDD8 conjugates but has no effect on Sentrin-1 conjugates. Also acts as a negative regulator of the ribosome quality control (RQC) by mediating deubiquitination of 40S ribosomal proteins RPS10/eS10 and RPS20/uS10, thereby antagonizing ZNF598-mediated 40S ubiquitination. In Rattus norvegicus (Rat), this protein is Ubiquitin carboxyl-terminal hydrolase 21 (Usp21).